The primary structure comprises 130 residues: Protein ApaG (130 aa).

Residues 3 to 127 (KAETRGIMVT…FSLDSPHLRR (125 aa)) enclose the ApaG domain.

The polypeptide is Protein ApaG (Methylorubrum extorquens (strain CM4 / NCIMB 13688) (Methylobacterium extorquens)).